A 358-amino-acid chain; its full sequence is uncharacterized protein (358 aa).

Residue 207–214 (AAVKDGKT) coordinates ATP.

This is an uncharacterized protein from Bacillus subtilis (strain 168).